Here is a 252-residue protein sequence, read N- to C-terminus: 5'-nucleotidase SurE (252 aa).

A divalent metal cation is bound by residues Asp8, Asp9, Ser40, and Asn92.

Belongs to the SurE nucleotidase family. Requires a divalent metal cation as cofactor.

Its subcellular location is the cytoplasm. The catalysed reaction is a ribonucleoside 5'-phosphate + H2O = a ribonucleoside + phosphate. Nucleotidase that shows phosphatase activity on nucleoside 5'-monophosphates. This is 5'-nucleotidase SurE from Mesorhizobium japonicum (strain LMG 29417 / CECT 9101 / MAFF 303099) (Mesorhizobium loti (strain MAFF 303099)).